The following is a 110-amino-acid chain: MLEKTTRMNYLYDFYQSLLTPKQRNYMSLYYLDDYSLGEIAEEYEVSRQAVYDNIKRTEAMLEDYEQKLLLFQKFQQRHKLLHRLKTHIAERYPNDEELMKLVLELEKLE.

Belongs to the UPF0122 family.

Functionally, might take part in the signal recognition particle (SRP) pathway. This is inferred from the conservation of its genetic proximity to ftsY/ffh. May be a regulatory protein. The sequence is that of UPF0122 protein Aflv_1766 from Anoxybacillus flavithermus (strain DSM 21510 / WK1).